The sequence spans 133 residues: Small ribosomal subunit protein uS8 (133 aa).

The protein belongs to the universal ribosomal protein uS8 family. In terms of assembly, part of the 30S ribosomal subunit. Contacts proteins S5 and S12.

In terms of biological role, one of the primary rRNA binding proteins, it binds directly to 16S rRNA central domain where it helps coordinate assembly of the platform of the 30S subunit. This Deinococcus radiodurans (strain ATCC 13939 / DSM 20539 / JCM 16871 / CCUG 27074 / LMG 4051 / NBRC 15346 / NCIMB 9279 / VKM B-1422 / R1) protein is Small ribosomal subunit protein uS8.